Reading from the N-terminus, the 155-residue chain is UPF0178 protein mlr0875 (155 aa).

Belongs to the UPF0178 family.

This is UPF0178 protein mlr0875 from Mesorhizobium japonicum (strain LMG 29417 / CECT 9101 / MAFF 303099) (Mesorhizobium loti (strain MAFF 303099)).